Reading from the N-terminus, the 223-residue chain is Small ribosomal subunit protein uS3 (223 aa).

The region spanning isoleucine 39 to alanine 117 is the KH type-2 domain.

It belongs to the universal ribosomal protein uS3 family. Part of the 30S ribosomal subunit. Forms a tight complex with proteins S10 and S14.

Binds the lower part of the 30S subunit head. Binds mRNA in the 70S ribosome, positioning it for translation. The chain is Small ribosomal subunit protein uS3 from Chlamydia abortus (strain DSM 27085 / S26/3) (Chlamydophila abortus).